The sequence spans 265 residues: MSSLISFIFLFLFSFLTSFKASAQDPFYLNHYCPNTTTYSRFSTYSTNLRTLLSSFASRNASYSTGFQNVTVGQTPDLVTGLFLCRGDLSPEVCSNCVAFSVDEALTRCPSQREAVFYYEECILRYSDKNILSTAITNEGEFILSNTNTISPNQSQINQFIVLVQSNMNQAAMEAANSSRKFSTIKTELTELQTLYGLVQCTPDLTSQDCLRCLTRSINRMPLSRIGARQFWPSCNSRYELYSFYNETTIGTPSPPPPPSPSRAN.

The signal sequence occupies residues 1-23 (MSSLISFIFLFLFSFLTSFKASA). Gnk2-homologous domains are found at residues 27-131 (FYLN…DKNI) and 142-244 (FILS…LYSF). 6 N-linked (GlcNAc...) asparagine glycosylation sites follow: asparagine 35, asparagine 60, asparagine 69, asparagine 153, asparagine 177, and asparagine 246.

It belongs to the protein kinase superfamily. Ser/Thr protein kinase family. CRK subfamily.

It localises to the secreted. This is Putative cysteine-rich receptor-like protein kinase 9 (CRK9) from Arabidopsis thaliana (Mouse-ear cress).